We begin with the raw amino-acid sequence, 460 residues long: UDP-N-acetylmuramoylalanine--D-glutamate ligase (460 aa).

122 to 128 (GSNGKST) serves as a coordination point for ATP.

The protein belongs to the MurCDEF family.

It is found in the cytoplasm. The enzyme catalyses UDP-N-acetyl-alpha-D-muramoyl-L-alanine + D-glutamate + ATP = UDP-N-acetyl-alpha-D-muramoyl-L-alanyl-D-glutamate + ADP + phosphate + H(+). Its pathway is cell wall biogenesis; peptidoglycan biosynthesis. Functionally, cell wall formation. Catalyzes the addition of glutamate to the nucleotide precursor UDP-N-acetylmuramoyl-L-alanine (UMA). This is UDP-N-acetylmuramoylalanine--D-glutamate ligase from Jannaschia sp. (strain CCS1).